The primary structure comprises 183 residues: ATP-dependent protease subunit HslV (183 aa).

Residue Thr13 is part of the active site. Residues Gly168, Cys171, and Thr174 each contribute to the Na(+) site.

The protein belongs to the peptidase T1B family. HslV subfamily. A double ring-shaped homohexamer of HslV is capped on each side by a ring-shaped HslU homohexamer. The assembly of the HslU/HslV complex is dependent on binding of ATP.

It is found in the cytoplasm. The catalysed reaction is ATP-dependent cleavage of peptide bonds with broad specificity.. Its activity is regulated as follows. Allosterically activated by HslU binding. Protease subunit of a proteasome-like degradation complex believed to be a general protein degrading machinery. This is ATP-dependent protease subunit HslV from Xanthomonas oryzae pv. oryzae (strain MAFF 311018).